The primary structure comprises 474 residues: Proline--tRNA ligase (474 aa).

The protein belongs to the class-II aminoacyl-tRNA synthetase family. ProS type 3 subfamily. Homodimer.

The protein localises to the cytoplasm. It catalyses the reaction tRNA(Pro) + L-proline + ATP = L-prolyl-tRNA(Pro) + AMP + diphosphate. In terms of biological role, catalyzes the attachment of proline to tRNA(Pro) in a two-step reaction: proline is first activated by ATP to form Pro-AMP and then transferred to the acceptor end of tRNA(Pro). This Mycoplasma capricolum subsp. capricolum (strain California kid / ATCC 27343 / NCTC 10154) protein is Proline--tRNA ligase.